Here is a 328-residue protein sequence, read N- to C-terminus: GTPase Obg 2 (328 aa).

Residues 1–139 enclose the Obg domain; sequence MSFRREKFIE…HCVLLKLKIV (139 aa). In terms of domain architecture, OBG-type G spans 140 to 309; it reads SDVGIIGMPN…LHAQVKKAVV (170 aa). GTP-binding positions include 146–153, 171–175, 192–195, 259–262, and 290–292; these read GMPNAGKS, FTTLE, DIPG, NKCD, and GDE. Positions 153 and 173 each coordinate Mg(2+).

This sequence belongs to the TRAFAC class OBG-HflX-like GTPase superfamily. OBG GTPase family. In terms of assembly, monomer. It depends on Mg(2+) as a cofactor.

It localises to the cytoplasm. An essential GTPase which binds GTP, GDP and possibly (p)ppGpp with moderate affinity, with high nucleotide exchange rates and a fairly low GTP hydrolysis rate. Plays a role in control of the cell cycle, stress response, ribosome biogenesis and in those bacteria that undergo differentiation, in morphogenesis control. This chain is GTPase Obg 2, found in Anaplasma marginale (strain St. Maries).